We begin with the raw amino-acid sequence, 216 residues long: Phosphoenolpyruvate guanylyltransferase (216 aa).

3 residues coordinate phosphoenolpyruvate: Thr139, Gly155, and Ser158.

Belongs to the CofC family.

The catalysed reaction is phosphoenolpyruvate + GTP + H(+) = enolpyruvoyl-2-diphospho-5'-guanosine + diphosphate. Its pathway is cofactor biosynthesis; coenzyme F420 biosynthesis. In terms of biological role, guanylyltransferase that catalyzes the activation of phosphoenolpyruvate (PEP) as enolpyruvoyl-2-diphospho-5'-guanosine, via the condensation of PEP with GTP. It is involved in the biosynthesis of coenzyme F420, a hydride carrier cofactor. This chain is Phosphoenolpyruvate guanylyltransferase, found in Streptomyces avermitilis (strain ATCC 31267 / DSM 46492 / JCM 5070 / NBRC 14893 / NCIMB 12804 / NRRL 8165 / MA-4680).